A 204-amino-acid chain; its full sequence is Recombination protein RecR (204 aa).

The C4-type zinc finger occupies 58 to 75 (CSVCQNITDVGVDPCALC). The 99-residue stretch at 83–181 (SVICVVESPV…HVTKIARGIP (99 aa)) folds into the Toprim domain.

The protein belongs to the RecR family.

Its function is as follows. May play a role in DNA repair. It seems to be involved in an RecBC-independent recombinational process of DNA repair. It may act with RecF and RecO. This Pelodictyon phaeoclathratiforme (strain DSM 5477 / BU-1) protein is Recombination protein RecR.